Reading from the N-terminus, the 296-residue chain is Phosphatidylserine decarboxylase proenzyme (296 aa).

Catalysis depends on charge relay system; for autoendoproteolytic cleavage activity residues aspartate 113, histidine 169, and serine 256. Serine 256 serves as the catalytic Schiff-base intermediate with substrate; via pyruvic acid; for decarboxylase activity. Pyruvic acid (Ser); by autocatalysis is present on serine 256.

This sequence belongs to the phosphatidylserine decarboxylase family. PSD-B subfamily. Prokaryotic type II sub-subfamily. Heterodimer of a large membrane-associated beta subunit and a small pyruvoyl-containing alpha subunit. It depends on pyruvate as a cofactor. Post-translationally, is synthesized initially as an inactive proenzyme. Formation of the active enzyme involves a self-maturation process in which the active site pyruvoyl group is generated from an internal serine residue via an autocatalytic post-translational modification. Two non-identical subunits are generated from the proenzyme in this reaction, and the pyruvate is formed at the N-terminus of the alpha chain, which is derived from the carboxyl end of the proenzyme. The autoendoproteolytic cleavage occurs by a canonical serine protease mechanism, in which the side chain hydroxyl group of the serine supplies its oxygen atom to form the C-terminus of the beta chain, while the remainder of the serine residue undergoes an oxidative deamination to produce ammonia and the pyruvoyl prosthetic group on the alpha chain. During this reaction, the Ser that is part of the protease active site of the proenzyme becomes the pyruvoyl prosthetic group, which constitutes an essential element of the active site of the mature decarboxylase.

Its subcellular location is the cell membrane. The enzyme catalyses a 1,2-diacyl-sn-glycero-3-phospho-L-serine + H(+) = a 1,2-diacyl-sn-glycero-3-phosphoethanolamine + CO2. It participates in phospholipid metabolism; phosphatidylethanolamine biosynthesis; phosphatidylethanolamine from CDP-diacylglycerol: step 2/2. Catalyzes the formation of phosphatidylethanolamine (PtdEtn) from phosphatidylserine (PtdSer). The polypeptide is Phosphatidylserine decarboxylase proenzyme (Clostridium kluyveri (strain ATCC 8527 / DSM 555 / NBRC 12016 / NCIMB 10680 / K1)).